A 130-amino-acid chain; its full sequence is Large ribosomal subunit protein bL17 (130 aa).

Belongs to the bacterial ribosomal protein bL17 family. Part of the 50S ribosomal subunit. Contacts protein L32.

In Paraburkholderia xenovorans (strain LB400), this protein is Large ribosomal subunit protein bL17.